A 75-amino-acid chain; its full sequence is MAAKPFFRRRKVCPFSGDNAPKIDYKDTRLLQRYISERGKIVPSRITAVSAKKQRELARAIKRARFLALLPYAVK.

Belongs to the bacterial ribosomal protein bS18 family. As to quaternary structure, part of the 30S ribosomal subunit. Forms a tight heterodimer with protein bS6.

Functionally, binds as a heterodimer with protein bS6 to the central domain of the 16S rRNA, where it helps stabilize the platform of the 30S subunit. This is Small ribosomal subunit protein bS18 from Dinoroseobacter shibae (strain DSM 16493 / NCIMB 14021 / DFL 12).